The sequence spans 164 residues: Transcriptional repressor NrdR (164 aa).

A zinc finger spans residues 3-34; sequence CPFCRHDDTQVVDSRVSEDGAAIRRRRRCPAC. Residues 49-139 form the ATP-cone domain; sequence PSVVKKDGSR…VYRRFEDVSE (91 aa).

Belongs to the NrdR family. It depends on Zn(2+) as a cofactor.

Its function is as follows. Negatively regulates transcription of bacterial ribonucleotide reductase nrd genes and operons by binding to NrdR-boxes. The polypeptide is Transcriptional repressor NrdR (Paraburkholderia phymatum (strain DSM 17167 / CIP 108236 / LMG 21445 / STM815) (Burkholderia phymatum)).